A 297-amino-acid polypeptide reads, in one-letter code: MLNGIIVIDKDKGMTSADVVYHLRRALHIRKIGHAGTLDPEVTGVLPIAIGQATKLIELMHTRPKKYQGTGLFGYATDSYDIDGKVLKEKRLVMPFTVEEIQRGMNTFKGKIEQVPPIYSAVKVNGKHLYEYAREGIKVERPKRQVEIFQYDLLNDPSFDKEKGQESFDFEITCSKGTYVRSLVNDLGEKLDEPAVMTYLRRVASSGFDISQAVKLSEIEANPEKASELIQPIDAFFKDYETIDLPEGKWLKVKNGAGISLETNAKKVALRYNEKVKAIYEKKGKIYRPSLMLLQNE.

The active-site Nucleophile is the Asp39.

The protein belongs to the pseudouridine synthase TruB family. Type 1 subfamily.

It catalyses the reaction uridine(55) in tRNA = pseudouridine(55) in tRNA. Functionally, responsible for synthesis of pseudouridine from uracil-55 in the psi GC loop of transfer RNAs. This is tRNA pseudouridine synthase B from Lactobacillus acidophilus (strain ATCC 700396 / NCK56 / N2 / NCFM).